The chain runs to 253 residues: Electron transfer flavoprotein subunit beta, mitochondrial (253 aa).

Belongs to the ETF beta-subunit/FixA family. Heterodimer of an alpha and a beta subunit. It depends on FAD as a cofactor. AMP is required as a cofactor.

Its subcellular location is the mitochondrion matrix. Functionally, the electron transfer flavoprotein serves as a specific electron acceptor for several dehydrogenases, including five acyl-CoA dehydrogenases, glutaryl-CoA and sarcosine dehydrogenase. It transfers the electrons to the main mitochondrial respiratory chain via ETF-ubiquinone oxidoreductase (ETF dehydrogenase). The chain is Electron transfer flavoprotein subunit beta, mitochondrial (ETFB) from Oryza sativa subsp. japonica (Rice).